A 552-amino-acid chain; its full sequence is 4-coumarate--CoA ligase-like 4 (552 aa).

The interval 182-205 (ISATTPDPARRKDRVTQDDPATLL) is disordered. Residues 189 to 198 (PARRKDRVTQ) show a composition bias toward basic and acidic residues. The ATP site is built by serine 207, serine 208, glycine 209, threonine 210, threonine 211, and lysine 215. (E)-4-coumaroyl-AMP is bound at residue tyrosine 256. Residue lysine 277 coordinates CoA. The tract at residues 279 to 346 (ELPEMLRSIN…EKYPQVEILQ (68 aa)) is SBD1. Residues glycine 324, glutamine 346, glycine 347, and threonine 351 each coordinate (E)-4-coumaroyl-AMP. ATP-binding residues include glutamine 346, glycine 347, threonine 351, aspartate 432, and arginine 447. The segment at 347–411 (GYGLTESTAI…IRGPYVMKGY (65 aa)) is SBD2. (E)-4-coumaroyl-AMP is bound by residues lysine 449 and lysine 453. Lysine 455 and glycine 456 together coordinate CoA. Lysine 538 is an ATP binding site.

Belongs to the ATP-dependent AMP-binding enzyme family. Requires Mg(2+) as cofactor.

The enzyme catalyses (E)-4-coumarate + ATP + CoA = (E)-4-coumaroyl-CoA + AMP + diphosphate. It catalyses the reaction (E)-4-coumarate + ATP + H(+) = (E)-4-coumaroyl-AMP + diphosphate. The catalysed reaction is (E)-4-coumaroyl-AMP + CoA = (E)-4-coumaroyl-CoA + AMP + H(+). Its function is as follows. Carboxylate--CoA ligase that may use 4-coumarate as substrate. Follows a two-step reaction mechanism, wherein the carboxylate substrate first undergoes adenylation by ATP, followed by a thioesterification in the presence of CoA to yield the final CoA thioester. The polypeptide is 4-coumarate--CoA ligase-like 4 (4CLL4) (Oryza sativa subsp. japonica (Rice)).